The primary structure comprises 139 residues: Inactive palmitoleoyl-protein carboxylesterase notum1b (139 aa).

This sequence belongs to the pectinacetylesterase family. Notum subfamily.

Functionally, probable inactive palmitoleoyl-protein carboxylesterase. In Danio rerio (Zebrafish), this protein is Inactive palmitoleoyl-protein carboxylesterase notum1b.